The sequence spans 675 residues: Methionine--tRNA ligase (675 aa).

Positions 15-25 (PYANGSIHLGH) match the 'HIGH' region motif. Residues C146, C149, C159, and C162 each coordinate Zn(2+). A 'KMSKS' region motif is present at residues 332 to 336 (KMSKS). ATP is bound at residue K335. A tRNA-binding domain is found at 573–675 (DFAKVDMRIA…SGAQPGMQVK (103 aa)).

The protein belongs to the class-I aminoacyl-tRNA synthetase family. MetG type 1 subfamily. In terms of assembly, homodimer. Requires Zn(2+) as cofactor.

It localises to the cytoplasm. The enzyme catalyses tRNA(Met) + L-methionine + ATP = L-methionyl-tRNA(Met) + AMP + diphosphate. Is required not only for elongation of protein synthesis but also for the initiation of all mRNA translation through initiator tRNA(fMet) aminoacylation. The sequence is that of Methionine--tRNA ligase from Yersinia pseudotuberculosis serotype IB (strain PB1/+).